The sequence spans 715 residues: Fatty acid oxidation complex subunit alpha (715 aa).

An enoyl-CoA hydratase/isomerase region spans residues 1–190 (MIYEGKAITV…KVGAVDAVVA (190 aa)). Aspartate 297 contributes to the substrate binding site. Residues 312–715 (KDVKQAAVLG…MAKNGQSFFG (404 aa)) are 3-hydroxyacyl-CoA dehydrogenase. NAD(+)-binding positions include methionine 325, aspartate 344, 401 to 403 (VVE), lysine 408, and serine 430. Histidine 451 serves as the catalytic For 3-hydroxyacyl-CoA dehydrogenase activity. Asparagine 454 is a binding site for NAD(+). The substrate site is built by asparagine 501 and tyrosine 660.

In the N-terminal section; belongs to the enoyl-CoA hydratase/isomerase family. The protein in the C-terminal section; belongs to the 3-hydroxyacyl-CoA dehydrogenase family. In terms of assembly, heterotetramer of two alpha chains (FadB) and two beta chains (FadA).

The enzyme catalyses a (3S)-3-hydroxyacyl-CoA + NAD(+) = a 3-oxoacyl-CoA + NADH + H(+). It carries out the reaction a (3S)-3-hydroxyacyl-CoA = a (2E)-enoyl-CoA + H2O. It catalyses the reaction a 4-saturated-(3S)-3-hydroxyacyl-CoA = a (3E)-enoyl-CoA + H2O. The catalysed reaction is (3S)-3-hydroxybutanoyl-CoA = (3R)-3-hydroxybutanoyl-CoA. The enzyme catalyses a (3Z)-enoyl-CoA = a 4-saturated (2E)-enoyl-CoA. It carries out the reaction a (3E)-enoyl-CoA = a 4-saturated (2E)-enoyl-CoA. The protein operates within lipid metabolism; fatty acid beta-oxidation. Involved in the aerobic and anaerobic degradation of long-chain fatty acids via beta-oxidation cycle. Catalyzes the formation of 3-oxoacyl-CoA from enoyl-CoA via L-3-hydroxyacyl-CoA. It can also use D-3-hydroxyacyl-CoA and cis-3-enoyl-CoA as substrate. The polypeptide is Fatty acid oxidation complex subunit alpha (Pseudomonas fluorescens (strain ATCC BAA-477 / NRRL B-23932 / Pf-5)).